The sequence spans 1044 residues: DEMETER-like protein 3 (1044 aa).

Polar residues predominate over residues 1–15 (MLTDGSQHTYQNGET). The segment at 1-107 (MLTDGSQHTY…KPRNPATTRL (107 aa)) is disordered. Basic and acidic residues predominate over residues 16-30 (KNSKEHERKCDESAH). Basic residues predominate over residues 38–53 (THKKKEKKNSKEKHGI). Residues 54-66 (KHSESEHLQDDIS) are compositionally biased toward basic and acidic residues. Residues 71 to 89 (GKGRRRNSKGTPKKLRFNR) are compositionally biased toward basic residues. Residues 348-445 (KVNLDPETIK…AFMSVAAKFP (98 aa)) are DEMETER. 4 residues coordinate [4Fe-4S] cluster: C678, C685, C688, and C694. The segment at 1024–1044 (VRRLHTPPDERGPKFMSDDDI) is disordered.

It belongs to the DNA glycosylase family. DEMETER subfamily. Requires [4Fe-4S] cluster as cofactor.

It is found in the nucleus. Functionally, potential transcriptional activator that may act by nicking the target promoter. Catalyzes the release of 5-methylcytosine (5-meC) from DNA by a glycosylase/lyase mechanism. The protein is DEMETER-like protein 3 (DML3) of Arabidopsis thaliana (Mouse-ear cress).